The chain runs to 75 residues: Translation initiation factor IF-1 1 (75 aa).

In terms of domain architecture, S1-like spans 1–74; the sequence is MARSDMIEVD…TRGRIVYRYR (74 aa).

It belongs to the IF-1 family. In terms of assembly, component of the 30S ribosomal translation pre-initiation complex which assembles on the 30S ribosome in the order IF-2 and IF-3, IF-1 and N-formylmethionyl-tRNA(fMet); mRNA recruitment can occur at any time during PIC assembly.

The protein localises to the cytoplasm. One of the essential components for the initiation of protein synthesis. Stabilizes the binding of IF-2 and IF-3 on the 30S subunit to which N-formylmethionyl-tRNA(fMet) subsequently binds. Helps modulate mRNA selection, yielding the 30S pre-initiation complex (PIC). Upon addition of the 50S ribosomal subunit IF-1, IF-2 and IF-3 are released leaving the mature 70S translation initiation complex. This chain is Translation initiation factor IF-1 1, found in Symbiobacterium thermophilum (strain DSM 24528 / JCM 14929 / IAM 14863 / T).